The primary structure comprises 325 residues: Protein TMED8 (325 aa).

Positions 1-78 (MSDLQAAEGP…MVSPVSKDAT (78 aa)) are disordered. Residues 159–323 (PPCIWTFAKV…NKTLYFHIYY (165 aa)) form the GOLD domain. Position 169 is an N6-acetyllysine (K169). Positions 232–267 (TVQVSDSSDDEDEEEEEEEEIEEPVPAGDVERGSRS) are disordered. Residues 238-254 (SSDDEDEEEEEEEEIEE) show a composition bias toward acidic residues.

In Homo sapiens (Human), this protein is Protein TMED8 (TMED8).